The sequence spans 393 residues: NAD(P)H-quinone oxidoreductase subunit H, chloroplastic (393 aa).

The protein belongs to the complex I 49 kDa subunit family. In terms of assembly, NDH is composed of at least 16 different subunits, 5 of which are encoded in the nucleus.

The protein localises to the plastid. Its subcellular location is the chloroplast thylakoid membrane. The enzyme catalyses a plastoquinone + NADH + (n+1) H(+)(in) = a plastoquinol + NAD(+) + n H(+)(out). It catalyses the reaction a plastoquinone + NADPH + (n+1) H(+)(in) = a plastoquinol + NADP(+) + n H(+)(out). Functionally, NDH shuttles electrons from NAD(P)H:plastoquinone, via FMN and iron-sulfur (Fe-S) centers, to quinones in the photosynthetic chain and possibly in a chloroplast respiratory chain. The immediate electron acceptor for the enzyme in this species is believed to be plastoquinone. Couples the redox reaction to proton translocation, and thus conserves the redox energy in a proton gradient. This Brachypodium distachyon (Purple false brome) protein is NAD(P)H-quinone oxidoreductase subunit H, chloroplastic.